The following is a 25-amino-acid chain: Snake venom metalloproteinase catroxase (25 aa).

Glu-9 is a binding site for Ca(2+).

The protein belongs to the venom metalloproteinase (M12B) family. Monomer. The cofactor is Zn(2+). In terms of tissue distribution, expressed by the venom gland.

Its subcellular location is the secreted. Inhibited by EDTA, beta-mercaptoethanol, but not by PMSF, p-tosyl-L-phenylalanine chloromethyl ketone, p-tosyl-L-lysine chloromethyl ketone, soybean trypsin inhibitor and aprotinin. Functionally, metalloprotease that is highly active against alpha-(FGA) and beta-chains (FGB) of fibrinogen molecules. This chain is Snake venom metalloproteinase catroxase, found in Crotalus atrox (Western diamondback rattlesnake).